Here is a 225-residue protein sequence, read N- to C-terminus: Protein-disulfide oxidoreductase DsbI (225 aa).

A helical transmembrane segment spans residues 27–47 (FLWLLMAIAMGGLIILAHSFF). Cysteine 56 and cysteine 59 are oxidised to a cystine. Helical transmembrane passes span 65 to 85 (AMFVMVIGGVIAAINPKNIVL) and 87 to 107 (LIGCIAAFYGSIMGIKFSIKL). Cysteine 128 and cysteine 154 are disulfide-bonded. The helical transmembrane segment at 199 to 219 (CMLAFGLCLILLLVMSGAWAL) threads the bilayer.

This sequence belongs to the DsbB family. DsbI subfamily. In terms of assembly, interacts with DsbL.

The protein localises to the cell inner membrane. Its function is as follows. Required for disulfide bond formation in some proteins. Part of a redox system composed of DsbI and DsbL that mediates formation of an essential disulfide bond in AssT. This Salmonella choleraesuis (strain SC-B67) protein is Protein-disulfide oxidoreductase DsbI.